A 335-amino-acid polypeptide reads, in one-letter code: 3-ketodihydrosphingosine reductase TSC10 (335 aa).

4 residues coordinate NADPH: G42, S44, S45, and G46. Residues 42–46 (GGSSG) carry the GXSXG motif. An NADP(+)-binding site is contributed by L47. Residues R67, D68, K71, D95, and L96 each contribute to the NADPH site. D95 contributes to the NADP(+) binding site. Positions 190, 194, and 223 each coordinate NADP(+). Catalysis depends on Y190, which acts as the Proton acceptor. Catalysis depends on K194, which acts as the Lowers pKa of active site Tyr. Residues 288-308 (TNNFLLDTLWLIVSSVGVPIW) traverse the membrane as a helical segment.

Belongs to the short-chain dehydrogenases/reductases (SDR) family.

It is found in the endoplasmic reticulum membrane. The catalysed reaction is sphinganine + NADP(+) = 3-oxosphinganine + NADPH + H(+). It functions in the pathway lipid metabolism; sphingolipid metabolism. In terms of biological role, catalyzes the reduction of 3'-oxosphinganine (3-ketodihydrosphingosine/KDS) to sphinganine (dihydrosphingosine/DHS), the second step of de novo sphingolipid biosynthesis. The protein is 3-ketodihydrosphingosine reductase TSC10 (TSC10) of Cryptococcus neoformans var. neoformans serotype D (strain B-3501A) (Filobasidiella neoformans).